The following is a 436-amino-acid chain: GTPase Der (436 aa).

EngA-type G domains follow at residues 4 to 167 (SVVA…PNES) and 176 to 351 (IYFS…ESHT). GTP contacts are provided by residues 10 to 17 (GRPNVGKS), 57 to 61 (DTGGI), 119 to 122 (NKMD), 182 to 189 (GRPNVGKS), 229 to 233 (DTAGM), and 294 to 297 (NKWD). The KH-like domain occupies 352-436 (KRIPTNVLND…PIKLFARRRQ (85 aa)).

It belongs to the TRAFAC class TrmE-Era-EngA-EngB-Septin-like GTPase superfamily. EngA (Der) GTPase family. In terms of assembly, associates with the 50S ribosomal subunit.

Functionally, GTPase that plays an essential role in the late steps of ribosome biogenesis. This chain is GTPase Der, found in Oceanobacillus iheyensis (strain DSM 14371 / CIP 107618 / JCM 11309 / KCTC 3954 / HTE831).